The primary structure comprises 485 residues: Adenosylhomocysteinase (485 aa).

The substrate site is built by Thr60, Asp146, and Glu208. NAD(+) is bound at residue 209 to 211 (TTT). Substrate contacts are provided by Lys238 and Asp242. NAD(+) contacts are provided by residues Asn243, 272–277 (GYGDVG), Glu295, Asn330, 351–353 (IGH), and Asn399.

Belongs to the adenosylhomocysteinase family. The cofactor is NAD(+).

It localises to the cytoplasm. The catalysed reaction is S-adenosyl-L-homocysteine + H2O = L-homocysteine + adenosine. It functions in the pathway amino-acid biosynthesis; L-homocysteine biosynthesis; L-homocysteine from S-adenosyl-L-homocysteine: step 1/1. May play a key role in the regulation of the intracellular concentration of adenosylhomocysteine. This chain is Adenosylhomocysteinase, found in Streptomyces avermitilis (strain ATCC 31267 / DSM 46492 / JCM 5070 / NBRC 14893 / NCIMB 12804 / NRRL 8165 / MA-4680).